The following is a 100-amino-acid chain: Osteocalcin (100 aa).

An N-terminal signal peptide occupies residues methionine 1 to alanine 23. The propeptide occupies lysine 24–arginine 51. The 47-residue stretch at tyrosine 52–glycine 98 folds into the Gla domain. 4-hydroxyproline is present on proline 60. The Ca(2+) site is built by glutamate 68, glutamate 72, glutamate 75, and aspartate 81. 4-carboxyglutamate is present on residues glutamate 68, glutamate 72, and glutamate 75. Residues cysteine 74 and cysteine 80 are joined by a disulfide bond.

It belongs to the osteocalcin/matrix Gla protein family. In terms of processing, gamma-carboxyglutamate residues are formed by vitamin K dependent carboxylation by GGCX. These residues are essential for the binding of calcium. Decarboxylation promotes the hormone activity.

The protein resides in the secreted. Functionally, the carboxylated form is one of the main organic components of the bone matrix, which constitutes 1-2% of the total bone protein: it acts as a negative regulator of bone formation and is required to limit bone formation without impairing bone resorption or mineralization. The carboxylated form binds strongly to apatite and calcium. In terms of biological role, the uncarboxylated form acts as a hormone secreted by osteoblasts, which regulates different cellular processes, such as energy metabolism, male fertility and brain development. Regulates of energy metabolism by acting as a hormone favoring pancreatic beta-cell proliferation, insulin secretion and sensitivity and energy expenditure. Uncarboxylated osteocalcin hormone also promotes testosterone production in the testes: acts as a ligand for G protein-coupled receptor GPRC6A at the surface of Leydig cells, initiating a signaling response that promotes the expression of enzymes required for testosterone synthesis in a CREB-dependent manner. Also acts as a regulator of brain development: osteocalcin hormone crosses the blood-brain barrier and acts as a ligand for GPR158 on neurons, initiating a signaling response that prevents neuronal apoptosis in the hippocampus, favors the synthesis of all monoamine neurotransmitters and inhibits that of gamma-aminobutyric acid (GABA). Osteocalcin also crosses the placenta during pregnancy and maternal osteocalcin is required for fetal brain development. This Macaca mulatta (Rhesus macaque) protein is Osteocalcin (BGLAP).